Consider the following 179-residue polypeptide: ECF RNA polymerase sigma factor SigF (179 aa).

A sigma-70 factor domain-2 region spans residues 33 to 93; sequence RLRAYFMRRM…KLIDHWRRRK (61 aa). A Polymerase core binding motif is present at residues 51–64; sequence DLVQETLLAVHLKR. A sigma-70 factor domain-4 region spans residues 123 to 170; that stretch reads ALASLPQRQRMLVSDVKLTGLSLAEAGARAGISEGAAKVALHRALKAL. The segment at residues 145-164 is a DNA-binding region (H-T-H motif); that stretch reads LAEAGARAGISEGAAKVALH.

It belongs to the sigma-70 factor family. ECF subfamily.

The protein resides in the cytoplasm. Functionally, sigma factors are initiation factors that promote the attachment of RNA polymerase to specific initiation sites and are then released. Extracytoplasmic function (ECF) sigma factors are held in an inactive form by a cognate anti-sigma factor (NrsF in this case) until they are released. Up-regulates expression of 4 operons (sigF-nrsF, CCNA_02834, CCNA_03001 to CCNA_02999 and CCNA_03363 to CCNA_03366) in response to potassium dichromate (K(2)Cr(2)O(7)) or cadmium chloride (CdCl(2)). Overexpression of sigF leads to higher expression of its regulon. This chain is ECF RNA polymerase sigma factor SigF, found in Caulobacter vibrioides (strain NA1000 / CB15N) (Caulobacter crescentus).